We begin with the raw amino-acid sequence, 445 residues long: Argininosuccinate synthase (445 aa).

Residues 17–25 and alanine 43 contribute to the ATP site; that span reads AFSGGLDTS. Tyrosine 99 serves as a coordination point for L-citrulline. The ATP site is built by glycine 129 and threonine 131. Threonine 131, asparagine 135, and aspartate 136 together coordinate L-aspartate. Asparagine 135 is a binding site for L-citrulline. Aspartate 136 provides a ligand contact to ATP. L-citrulline is bound by residues arginine 139 and serine 192. Residue aspartate 194 participates in ATP binding. The L-citrulline site is built by threonine 201, glutamate 203, and glutamate 280.

It belongs to the argininosuccinate synthase family. Type 2 subfamily. Homotetramer.

Its subcellular location is the cytoplasm. It carries out the reaction L-citrulline + L-aspartate + ATP = 2-(N(omega)-L-arginino)succinate + AMP + diphosphate + H(+). Its pathway is amino-acid biosynthesis; L-arginine biosynthesis; L-arginine from L-ornithine and carbamoyl phosphate: step 2/3. In Bordetella petrii (strain ATCC BAA-461 / DSM 12804 / CCUG 43448), this protein is Argininosuccinate synthase.